The primary structure comprises 735 residues: Muskelin (735 aa).

The residue at position 2 (Ala-2) is an N-acetylalanine. Positions 172–204 constitute a LisH domain; the sequence is REQEAIRLCLKHFRQHNYTEAFESLQKKTKIAL. Residues 206 to 258 enclose the CTLH domain; it reads HPMLTDMHDKLVLKGDFDACEELIEKAVNDGLFNQYISQQEYKPRWSQIIPKS. 6 Kelch repeats span residues 284–330, 339–391, 400–458, 469–515, 526–578, and 597–651; these read TVYL…SCHK, QIYT…FDHQ, MIYT…SRIG, CLYV…TGFT, EIHV…SLQE, and VHYL…AQMD. The tract at residues 701 to 735 is important for location in the cytosol; that stretch reads DHTYAQRTQLFDTLVNFFPDSMTPPKGNLVDLITL.

Homodimer; may form higher oligomers. Identified in the CTLH complex that contains GID4, RANBP9 and/or RANBP10, MKLN1, MAEA, RMND5A (or alternatively its paralog RMND5B), GID8, ARMC8, WDR26 and YPEL5. Within this complex, MAEA, RMND5A (or alternatively its paralog RMND5B), GID8, WDR26, and RANBP9 and/or RANBP10 form the catalytic core, while GID4, MKLN1, ARMC8 and YPEL5 have ancillary roles. Interacts with RANBP9. Part of a complex consisting of RANBP9, MKLN1 and GID8. Interacts with GABRA1. Interacts with the C-terminal tail of PTGER3. As to expression, detected in brain, especially in hippocampus and cerebellum (at protein level).

The protein localises to the cytoplasm. It is found in the cytosol. It localises to the nucleus. Its subcellular location is the nucleoplasm. The protein resides in the cell projection. The protein localises to the ruffle. It is found in the cell cortex. It localises to the synapse. Its subcellular location is the postsynapse. Its function is as follows. Component of the CTLH E3 ubiquitin-protein ligase complex that selectively accepts ubiquitin from UBE2H and mediates ubiquitination and subsequent proteasomal degradation of the transcription factor HBP1. Required for internalization of the GABA receptor GABRA1 from the cell membrane via endosomes and subsequent GABRA1 degradation. Acts as a mediator of cell spreading and cytoskeletal responses to the extracellular matrix component THBS1. The sequence is that of Muskelin (Mkln1) from Mus musculus (Mouse).